The chain runs to 131 residues: Bacteriohemerythrin (131 aa).

H22, H58, E62, H77, H81, H117, and D122 together coordinate Fe cation.

Belongs to the hemerythrin family. Monomer.

Its function is as follows. Oxygen-binding protein. May be involved in a storage mechanism or for delivery to oxygen-requiring enzymes. The oxygen-binding site contains two iron atoms. In Methylococcus capsulatus (strain ATCC 33009 / NCIMB 11132 / Bath), this protein is Bacteriohemerythrin.